Here is a 147-residue protein sequence, read N- to C-terminus: uncharacterized protein (147 aa).

Disordered stretches follow at residues 1 to 49 (MRTP…NLNE) and 125 to 147 (SPSPTTSFNSTNPQNTHQTRKSN). 2 stretches are compositionally biased toward low complexity: residues 8–49 (NNNY…NLNE) and 125–140 (SPSPTTSFNSTNPQNT).

This is an uncharacterized protein from Dictyostelium discoideum (Social amoeba).